We begin with the raw amino-acid sequence, 717 residues long: DNA polymerase iota (717 aa).

Residues 1 to 22 are disordered; that stretch reads MEPLHAGAAGSSRAVCSQGPPT. Residues 30–243 enclose the UmuC domain; the sequence is IVHVDLDCFY…NHIKEIPGIG (214 aa). Mg(2+) is bound by residues D34 and L35. A 2'-deoxyribonucleoside 5'-triphosphate-binding residues include Y39 and R71. D126 is a Mg(2+) binding site. E127 acts as the Proton acceptor in catalysis. 2 DNA-binding regions span residues 300-307 and 343-360; these read QSFSEEDT and RLVIRRYSDKHCNRESRQ. A Ubiquitin-binding 1 (UBM1) motif is present at residues 500–517; the sequence is VDQEVFKQLPADIQEEIL. 3 disordered regions span residues 549 to 589, 603 to 622, and 644 to 687; these read QMQA…SHPS, KDEQTSQGPTESQGCQFSST, and HRTV…DIDP. A compositionally biased stretch (low complexity) spans 575–589; sequence PGTSGLSPGSTSHPS. Polar residues-rich tracts occupy residues 607–622 and 652–662; these read TSQGPTESQGCQFSST and QTATASHQGLE. Residues 665–679 show a composition bias toward basic and acidic residues; that stretch reads QGLESRELDSAEEKL. The Ubiquitin-binding 2 (UBM2) signature appears at 685-702; the sequence is IDPQVFYELPEEVQKELM.

Belongs to the DNA polymerase type-Y family. In terms of assembly, interacts with POLH. Interacts with REV1. Interacts with ubiquitin. Mg(2+) serves as cofactor. It depends on Mn(2+) as a cofactor. Monoubiquitinated. Protein monoubiquitination prevents POLI binding to ubiquitin via the ubiquitin-binding motif 1 and ubiquitin-binding motif 2. As to expression, detected in testis, and at very low levels in spleen, lung and brain. Detected in round spermatids, but not in prophase spermatocytes.

It is found in the nucleus. The enzyme catalyses DNA(n) + a 2'-deoxyribonucleoside 5'-triphosphate = DNA(n+1) + diphosphate. Its function is as follows. Error-prone DNA polymerase specifically involved in DNA repair. Plays an important role in translesion synthesis, where the normal high-fidelity DNA polymerases cannot proceed and DNA synthesis stalls. Favors Hoogsteen base-pairing in the active site. Inserts the correct base with high-fidelity opposite an adenosine template. Exhibits low fidelity and efficiency opposite a thymidine template, where it will preferentially insert guanosine. May play a role in hypermutation of immunoglobulin genes. Forms a Schiff base with 5'-deoxyribose phosphate at abasic sites, but may not have lyase activity. This chain is DNA polymerase iota (Poli), found in Mus musculus (Mouse).